A 911-amino-acid polypeptide reads, in one-letter code: DNA ligase 4 (911 aa).

Positions 271, 272, 273, 274, 278, 331, 345, 367, 427, 432, 449, and 451 each coordinate ATP. Catalysis depends on Lys273, which acts as the N6-AMP-lysine intermediate. Glu331 provides a ligand contact to Mg(2+). Glu427 contacts Mg(2+). The interval 610–620 is required for catalytic activity; sequence LASKHLYIGGD. 2 BRCT domains span residues 654–743 and 808–911; these read KISN…PRFM and SPLS…QYLI.

Belongs to the ATP-dependent DNA ligase family. As to quaternary structure, interacts with XRCC4; the LIG4-XRCC4 subcomplex has a 1:2 stoichiometry and XRCC4 is required for LIG4 stability. Component of the core long-range non-homologous end joining (NHEJ) complex (also named DNA-PK complex) composed of PRKDC, LIG4, XRCC4, XRCC6/Ku70, XRCC5/Ku86 and NHEJ1/XLF. Additional component of the NHEJ complex includes PAXX. Following autophosphorylation, PRKDC dissociates from DNA, leading to formation of the short-range NHEJ complex, composed of LIG4, XRCC4, XRCC6/Ku70, XRCC5/Ku86 and NHEJ1/XLF. Interacts with DCLRE1C; the interaction is direct. Interacts with APLF. Mg(2+) serves as cofactor. As to expression, testis, thymus, prostate and heart.

It localises to the nucleus. The enzyme catalyses ATP + (deoxyribonucleotide)n-3'-hydroxyl + 5'-phospho-(deoxyribonucleotide)m = (deoxyribonucleotide)n+m + AMP + diphosphate.. In terms of biological role, DNA ligase involved in DNA non-homologous end joining (NHEJ); required for double-strand break (DSB) repair and V(D)J recombination. Catalyzes the NHEJ ligation step of the broken DNA during DSB repair by resealing the DNA breaks after the gap filling is completed. Joins single-strand breaks in a double-stranded polydeoxynucleotide in an ATP-dependent reaction. LIG4 is mechanistically flexible: it can ligate nicks as well as compatible DNA overhangs alone, while in the presence of XRCC4, it can ligate ends with 2-nucleotides (nt) microhomology and 1-nt gaps. Forms a subcomplex with XRCC4; the LIG4-XRCC4 subcomplex is responsible for the NHEJ ligation step and XRCC4 enhances the joining activity of LIG4. Binding of the LIG4-XRCC4 complex to DNA ends is dependent on the assembly of the DNA-dependent protein kinase complex DNA-PK to these DNA ends. LIG4 regulates nuclear localization of XRCC4. In Homo sapiens (Human), this protein is DNA ligase 4.